The following is a 208-amino-acid chain: Imidazoleglycerol-phosphate dehydratase (208 aa).

It belongs to the imidazoleglycerol-phosphate dehydratase family.

The protein localises to the cytoplasm. It catalyses the reaction D-erythro-1-(imidazol-4-yl)glycerol 3-phosphate = 3-(imidazol-4-yl)-2-oxopropyl phosphate + H2O. The protein operates within amino-acid biosynthesis; L-histidine biosynthesis; L-histidine from 5-phospho-alpha-D-ribose 1-diphosphate: step 6/9. The polypeptide is Imidazoleglycerol-phosphate dehydratase (Symbiobacterium thermophilum (strain DSM 24528 / JCM 14929 / IAM 14863 / T)).